The primary structure comprises 33 residues: Photosystem II reaction center protein Psb30 (33 aa).

Residues 5-25 form a helical membrane-spanning segment; the sequence is VIAQLTVLALIVASGPLVIAL.

It belongs to the Psb30/Ycf12 family. In terms of assembly, PSII is composed of 1 copy each of membrane proteins PsbA, PsbB, PsbC, PsbD, PsbE, PsbF, PsbH, PsbI, PsbJ, PsbK, PsbL, PsbM, PsbT, PsbX, PsbY, PsbZ, Psb30/Ycf12, peripheral proteins of the oxygen-evolving complex and a large number of cofactors. It forms dimeric complexes.

The protein localises to the plastid. It is found in the chloroplast thylakoid membrane. Functionally, a core subunit of photosystem II (PSII), probably helps stabilize the reaction center. The polypeptide is Photosystem II reaction center protein Psb30 (Marchantia polymorpha (Common liverwort)).